Here is a 1380-residue protein sequence, read N- to C-terminus: DNA-directed RNA polymerase subunit beta (1380 aa).

The protein belongs to the RNA polymerase beta chain family. In terms of assembly, the RNAP catalytic core consists of 2 alpha, 1 beta, 1 beta' and 1 omega subunit. When a sigma factor is associated with the core the holoenzyme is formed, which can initiate transcription.

It catalyses the reaction RNA(n) + a ribonucleoside 5'-triphosphate = RNA(n+1) + diphosphate. DNA-dependent RNA polymerase catalyzes the transcription of DNA into RNA using the four ribonucleoside triphosphates as substrates. This Sinorhizobium fredii (strain NBRC 101917 / NGR234) protein is DNA-directed RNA polymerase subunit beta.